A 1026-amino-acid polypeptide reads, in one-letter code: MRFFALFIYRPVATILIAAAITLCGILGFRLLPVAPLPQVDFPVIMVSASLPGASPETMASSVATPLERSLGRIAGVNEMTSSSSLGSTRIILEFNFDRDINGAARDVQAAINAAQSLLPGGMPSRPTYRKANPSDAPIMILTLTSESWSQGKLYDFASTQLAQTIAQIDGVGDVDVGGSSLPAVRVGLNPQALFNQGVSLDEVREAIDSANVRRPQGAIEDSVHRWQIQTNDELKTAAEYQPLIIHYNNGAAVRLGDVASVTDSVQDVRNAGMTNAKPAILLMIRKLPEANIIQTVDGIRAKLPELRAMIPAAIDLQIAQDRSPTIRASLQEVEETLAISVALVILVVFLFLRSGRATLIPAVAVPVSLIGTFAAMYLCGFSLNNLSLMALTIATGFVVDDAIVVLENIARHLEAGMKPLQAALQGTREVGFTVISMSLSLVAVFLPLLLMGGLPGRLLREFAVTLSVAIGISLVVSLTLTPMMCGWMLKSSKPRTQPRKRGVGRLLVALQQGYGTSLKWVLNHTRLVGVVFLGTVALNIWLYIAIPKTFFPEQDTGVLMGGIQADQSISFQAMRGKLQDFMKIIRDDPAVNNVTGFTGGSRVNSGMMFITLKPRGERKETAQQIIDRLRVKLAKEPGARLFLMAVQDIRVGGRQANASYQYTLLSDSLAALREWEPKIRKALSALPQLADVNSDQQDNGAEMNLIYDRDTMSRLGIDVQAANSLLNNAFGQRQISTIYQPMNQYKVVMEVDPRYSQDISALEKMFVINRDGKAIPLSYFAQWRPANAPLSVNHQGLSAASTIAFNLPTGTSLSQATEAINRTMTQLGVPSTVRGSFSGTAQVFQQTMNSQLILIVAAIATVYIVLGILYESYVHPLTILSTLPSAGVGALLALELFNAPFSLIALIGIMLLIGIVKKNAIMMVDFALEAQRSGGLTPAQAIFQACLLRFRPIMMTTLAALFGALPLVLSGGDGSELRQPLGITIVGGLVMSQLLTLYTTPVVYLFFDRLRLRFSRKNSKPVVEI.

Transmembrane regions (helical) follow at residues 15–35, 333–353, 360–380, 387–407, 431–451, 463–483, 528–548, 853–873, 897–917, 953–973, and 984–1004; these read ILIA…LPVA, EVEE…FLFL, LIPA…MYLC, LSLM…IVVL, VGFT…PLLL, FAVT…TLTP, LVGV…IAIP, LILI…LYES, LFNA…IGIV, PIMM…LSGG, and ITIV…TPVV.

Belongs to the resistance-nodulation-cell division (RND) (TC 2.A.6) family. MdtC subfamily. Part of a tripartite efflux system composed of MdtA, MdtB and MdtC. MdtC forms a heteromultimer with MdtB.

The protein localises to the cell inner membrane. In Salmonella enteritidis PT4 (strain P125109), this protein is Multidrug resistance protein MdtC.